The chain runs to 575 residues: Delta-selinene-like synthase, chloroplastic (575 aa).

5 residues coordinate (2E,6E)-farnesyl diphosphate: arginine 288, aspartate 325, aspartate 329, arginine 466, and aspartate 469. Positions 325 and 329 each coordinate Mg(2+). Positions 325-329 (DDLYD) match the DDXXD motif motif. Mg(2+) is bound by residues aspartate 469 and glutamate 477.

It belongs to the terpene synthase family. Tpsb subfamily. As to quaternary structure, monomer. The cofactor is Mg(2+). Mn(2+) is required as a cofactor.

The protein resides in the plastid. It localises to the chloroplast. It catalyses the reaction (2E,6E)-farnesyl diphosphate = (+)-delta-selinene + diphosphate. The protein operates within secondary metabolite biosynthesis; terpenoid biosynthesis. Its pathway is terpene metabolism; oleoresin biosynthesis. Functionally, sesquiterpene synthase (sesqui-TPS) involved in the biosynthesis of sesquiterpene natural products. Catalyzes the conversion of (2E)-geranyl diphosphate (GPP) into delta-selinene. This Picea sitchensis (Sitka spruce) protein is Delta-selinene-like synthase, chloroplastic.